A 515-amino-acid polypeptide reads, in one-letter code: ATP synthase subunit alpha (515 aa).

169-176 lines the ATP pocket; the sequence is GDRQTGKT.

The protein belongs to the ATPase alpha/beta chains family. As to quaternary structure, F-type ATPases have 2 components, CF(1) - the catalytic core - and CF(0) - the membrane proton channel. CF(1) has five subunits: alpha(3), beta(3), gamma(1), delta(1), epsilon(1). CF(0) has three main subunits: a(1), b(2) and c(9-12). The alpha and beta chains form an alternating ring which encloses part of the gamma chain. CF(1) is attached to CF(0) by a central stalk formed by the gamma and epsilon chains, while a peripheral stalk is formed by the delta and b chains.

It localises to the cell inner membrane. It carries out the reaction ATP + H2O + 4 H(+)(in) = ADP + phosphate + 5 H(+)(out). Functionally, produces ATP from ADP in the presence of a proton gradient across the membrane. The alpha chain is a regulatory subunit. The sequence is that of ATP synthase subunit alpha from Neisseria gonorrhoeae (strain ATCC 700825 / FA 1090).